Reading from the N-terminus, the 248-residue chain is 5'-nucleotidase SurE (248 aa).

Residues Asp-8, Asp-9, Ser-39, and Asn-91 each contribute to the a divalent metal cation site.

It belongs to the SurE nucleotidase family. A divalent metal cation serves as cofactor.

The protein resides in the cytoplasm. It carries out the reaction a ribonucleoside 5'-phosphate + H2O = a ribonucleoside + phosphate. Functionally, nucleotidase that shows phosphatase activity on nucleoside 5'-monophosphates. This Citrifermentans bemidjiense (strain ATCC BAA-1014 / DSM 16622 / JCM 12645 / Bem) (Geobacter bemidjiensis) protein is 5'-nucleotidase SurE.